We begin with the raw amino-acid sequence, 346 residues long: Hydroxycarboxylic acid receptor 1 (346 aa).

The Extracellular segment spans residues 1-21; it reads MYNGSCCRIEGDTISQVMPPL. Asn-3 carries an N-linked (GlcNAc...) asparagine glycan. The chain crosses the membrane as a helical span at residues 22–42; that stretch reads LIVAFVLGALGNGVALCGFCF. At 43 to 49 the chain is on the cytoplasmic side; that stretch reads HMKTWKP. A helical transmembrane segment spans residues 50 to 70; sequence STVYLFNLAVADFLLMICLPF. Residues 71 to 89 are Extracellular-facing; the sequence is RTDYYLRRRHWAFGDIPCR. A disulfide bond links Cys-88 and Cys-165. Residues 90–110 form a helical membrane-spanning segment; sequence VGLFTLAMNRAGSIVFLTVVA. The Cytoplasmic segment spans residues 111-130; it reads ADRYFKVVHPHHAVNTISTR. The chain crosses the membrane as a helical span at residues 131 to 151; that stretch reads VAAGIVCTLWALVILGTVYLL. Residues 152-182 lie on the Extracellular side of the membrane; that stretch reads LENHLCVQETAVSCESFIMESANGWHDIMFQ. A helical membrane pass occupies residues 183 to 203; the sequence is LEFFMPLGIILFCSFKIVWSL. Topologically, residues 204–220 are cytoplasmic; the sequence is RRRQQLARQARMKKATR. A helical membrane pass occupies residues 221 to 241; that stretch reads FIMVVAIVFITCYLPSVSARL. At 242–261 the chain is on the extracellular side; it reads YFLWTVPSSACDPSVHGALH. Residues 262–281 form a helical membrane-spanning segment; the sequence is ITLSFTYMNSMLDPLVYYFS. Residues 282–346 lie on the Cytoplasmic side of the membrane; that stretch reads SPSFPKFYNK…QWDPHIVEWH (65 aa).

Belongs to the G-protein coupled receptor 1 family. As to expression, expressed abundantly in brown and white fat. It also detectable at lower levels in liver, kidney, skeletal muscle, brain and pituitary. Not detected in frontal, temporal and occipital lobes of the cortex, basal forebrain, caudate nucleus, nucleus accumbens and hippocampus.

The protein resides in the cell membrane. Functionally, acts as a receptor for L-lactate and mediates its anti-lipolytic effect through a G(i)-protein-mediated pathway. In Homo sapiens (Human), this protein is Hydroxycarboxylic acid receptor 1 (HCAR1).